We begin with the raw amino-acid sequence, 1161 residues long: MVKLSIVLTPQFLSHDQGQLTKELQQHVKSVTCPCEYLRKVINTLADHHHRGTDFGGSPWLHIIIAFPTSYKVVITLWIVYLWVSLLKTIFWSRNGHDGSTDVQQRAWRSNRRRQEGLRSICMHTKKRVSSFRGNKIGLKDVITLRRHVETKVRAKIRKRKVTTKINRHDKINGKRKTARKQKMFQRAQELRRRAEDYHKCKIPPSARKALCNWVRMAAAEHRHSSGLPYWPYLTAETLKNRMGHQPPPPTQQHCITDNSLSLKTPLECLLTPLPPSADDNLKTPPECLLTPLPPSADDNLKTPPECLLTPLPPSAPPSAPPSADDNLKTRAECLLHPLPPSADDNLKTPSERQLTPLPPSAPPSADDNIKTTAERLRGPLPPSADDNLKTPSERQLTPLPPSAPPSADDNIKTPAEHLRGPLPPSADDNLKTPSERQLTPLPPSAPPSADDNIKTPAERLRGPLPPSADDNLKTPSERQLTPLPPSAPPSADDNIKTPAEHLRGPLPPSADDNLKTPSERQLTPLPPSAPPSADDNIKTTAEHLRGPLPPSADDNLKTPSERQLTPLPPSAPPSADDNIKTPAEHLQFRFHPQRMIISRDLPSVSSLPFHPQLHPQQMIISRYLLSICGFRFHRQRMIISRHLPSVSSLPFHPQLHPQQMIISRHLPSVCGGRFHPQPMIISRHLPSVSSLPFHPQLHPQQMIISRHLPSVCGGRFHPQPMIISRHLPSVSSLPFHPQLHPQQMIISRHLPSVCGGRFHPQPMIISRHLPSVSSLPFHPQLHPQQMIISRHLPSVCGGRFHPQPMIISRHLPSVSSLPFHPQLHPQQMIISRHLPSVCGGRFHPQPMIISRHLPSVSSLPFHPQLHPQQMIISRHLPSVCGERLWVPLPPSADDNLKTPSKRQLTPLPPSAPPSADDNIKTPAERLRGPLPPSADDNLKTPSKRQLTPLPPSAPPSADDNIKTPAERLRGPLPPSADDNLKTPSERQLTPLPPSAPPSADDNIKTPAERLRGPLPPSADDNLKTPSERQLTPLPPSAPTSADDNIKTPAERLRGPLPPSADDNLKTPPLATQEAEAEKPRKPKRQRAAEMEPPPEPKRRRVGDVEPSRKPKRRRAADVEPSSPEPKRRRVGDVEPSRKPKRRRAADVEPSSPEPKRRRLS.

A helical membrane pass occupies residues 63–87 (IIIAFPTSYKVVITLWIVYLWVSLL). Disordered regions lie at residues 278–580 (ADDN…DDNI) and 892–1161 (SADD…RRLS). The segment covering 311-321 (PLPPSAPPSAP) has biased composition (pro residues). Composition is skewed to basic and acidic residues over residues 368–378 (DNIKTTAERLR), 410–420 (DNIKTPAEHLR), 452–462 (DNIKTPAERLR), 494–504 (DNIKTPAEHLR), 536–546 (DNIKTTAEHLR), 918–928 (DNIKTPAERLR), 960–970 (DNIKTPAERLR), 1002–1012 (DNIKTPAERLR), and 1044–1054 (DNIKTPAERLR).

The protein belongs to the NPIP family.

It localises to the membrane. The polypeptide is Nuclear pore complex-interacting protein family member B11 (NPIPB11) (Homo sapiens (Human)).